Consider the following 1001-residue polypeptide: Serine/threonine-protein kinase TAO1-A (1001 aa).

The region spanning 28 to 281 is the Protein kinase domain; that stretch reads FSDLREIGHG…SDELLKNMFV (254 aa). Residues 34–42 and lysine 57 each bind ATP; that span reads IGHGSFGAV. Aspartate 151 (proton acceptor) is an active-site residue. Disordered regions lie at residues 324 to 431 and 567 to 586; these read PAVE…HKSH and KEEL…EWLS. Positions 350 to 370 are enriched in low complexity; that stretch reads SNQSIPSMSISASSQSSSVTS. Composition is skewed to basic and acidic residues over residues 375-388 and 577-586; these read SDDK…EGDH and PKKEKQEWLS. 2 coiled-coil regions span residues 458-651 and 754-877; these read SELR…EHAM and KAVL…EIEA. The interval 911 to 1001 is disordered; the sequence is SHNPTGGPGP…ISNGSRMSYT (91 aa). Residues 921–930 are compositionally biased toward low complexity; the sequence is HWGHPMAGPP. 2 stretches are compositionally biased toward polar residues: residues 949-967 and 974-1001; these read GSVQ…NSPQ and SGGQ…MSYT.

This sequence belongs to the protein kinase superfamily. STE Ser/Thr protein kinase family. STE20 subfamily.

Its subcellular location is the cytoplasm. The enzyme catalyses L-seryl-[protein] + ATP = O-phospho-L-seryl-[protein] + ADP + H(+). It catalyses the reaction L-threonyl-[protein] + ATP = O-phospho-L-threonyl-[protein] + ADP + H(+). In terms of biological role, serine/threonine-protein kinase involved in various processes such as p38/mapk14 stress-activated MAPK cascade, DNA damage response and regulation of cytoskeleton stability. Acts as an activator of the p38/MAPK14 stress-activated MAPK cascade by mediating phosphorylation and subsequent activation of upstream MAP kinase kinases. In response to DNA damage, involved in the G2/M transition DNA damage checkpoint by activating the p38/MAPK14 stress-activated MAPK cascade. This is Serine/threonine-protein kinase TAO1-A (taok1-a) from Xenopus laevis (African clawed frog).